The chain runs to 446 residues: Amino-acid acetyltransferase (446 aa).

Positions 299 to 431 (EQVRDAEIDD…SHLPMKKQKL (133 aa)) constitute an N-acetyltransferase domain.

Belongs to the acetyltransferase family. ArgA subfamily.

It is found in the cytoplasm. It carries out the reaction L-glutamate + acetyl-CoA = N-acetyl-L-glutamate + CoA + H(+). It functions in the pathway amino-acid biosynthesis; L-arginine biosynthesis; N(2)-acetyl-L-ornithine from L-glutamate: step 1/4. This Aliivibrio fischeri (strain MJ11) (Vibrio fischeri) protein is Amino-acid acetyltransferase.